The chain runs to 101 residues: Small ribosomal subunit protein uS14 (101 aa).

This sequence belongs to the universal ribosomal protein uS14 family. Part of the 30S ribosomal subunit. Contacts proteins S3 and S10.

Binds 16S rRNA, required for the assembly of 30S particles and may also be responsible for determining the conformation of the 16S rRNA at the A site. This is Small ribosomal subunit protein uS14 from Beijerinckia indica subsp. indica (strain ATCC 9039 / DSM 1715 / NCIMB 8712).